The chain runs to 259 residues: 4-hydroxy-tetrahydrodipicolinate reductase (259 aa).

Residues 8-13 (GFKGRM), 93-95 (GTT), and 119-122 (APNF) contribute to the NAD(+) site. The active-site Proton donor/acceptor is histidine 149. Histidine 150 contributes to the (S)-2,3,4,5-tetrahydrodipicolinate binding site. The Proton donor role is filled by lysine 153. Position 159–160 (159–160 (GT)) interacts with (S)-2,3,4,5-tetrahydrodipicolinate.

This sequence belongs to the DapB family.

It is found in the cytoplasm. It catalyses the reaction (S)-2,3,4,5-tetrahydrodipicolinate + NAD(+) + H2O = (2S,4S)-4-hydroxy-2,3,4,5-tetrahydrodipicolinate + NADH + H(+). It carries out the reaction (S)-2,3,4,5-tetrahydrodipicolinate + NADP(+) + H2O = (2S,4S)-4-hydroxy-2,3,4,5-tetrahydrodipicolinate + NADPH + H(+). It participates in amino-acid biosynthesis; L-lysine biosynthesis via DAP pathway; (S)-tetrahydrodipicolinate from L-aspartate: step 4/4. In terms of biological role, catalyzes the conversion of 4-hydroxy-tetrahydrodipicolinate (HTPA) to tetrahydrodipicolinate. The chain is 4-hydroxy-tetrahydrodipicolinate reductase from Enterococcus faecalis (strain ATCC 700802 / V583).